Here is a 1218-residue protein sequence, read N- to C-terminus: Coatomer subunit alpha-1 (1218 aa).

WD repeat units lie at residues 7 to 48 (TKSN…DRFD), 49 to 88 (EHDG…CLFT), 91 to 132 (GHLD…AVLT), 133 to 172 (GHNH…KKTV), 202 to 241 (GHDR…AWEV), 246 to 285 (GHMN…GIQT), 288 to 326 (REHD…PAFS), 363 to 404 (SLNQ…AGRA), and 450 to 489 (PLPI…GELQ). Positions 857 to 882 (NGGDGFDAEEGEANEEDGEEGGWDLE) are disordered. Over residues 862 to 882 (FDAEEGEANEEDGEEGGWDLE) the composition is skewed to acidic residues.

Oligomeric complex that consists of at least the alpha, beta, beta', gamma, delta, epsilon and zeta subunits.

The protein localises to the cytoplasm. It localises to the golgi apparatus membrane. It is found in the cytoplasmic vesicle. The protein resides in the COPI-coated vesicle membrane. In terms of biological role, the coatomer is a cytosolic protein complex that binds to dilysine motifs and reversibly associates with Golgi non-clathrin-coated vesicles, which further mediate biosynthetic protein transport from the ER, via the Golgi up to the trans Golgi network. Coatomer complex is required for budding from Golgi membranes, and is essential for the retrograde Golgi-to-ER transport of dilysine-tagged proteins. The polypeptide is Coatomer subunit alpha-1 (Oryza sativa subsp. japonica (Rice)).